A 198-amino-acid polypeptide reads, in one-letter code: Dynactin subunit 5 (198 aa).

Polar residues predominate over residues 179–188; it reads NTPASKGLPS. Residues 179–198 are disordered; sequence NTPASKGLPSTPTKLQTTTT. The segment covering 189 to 198 has biased composition (low complexity); that stretch reads TPTKLQTTTT.

The protein belongs to the dynactin subunits 5/6 family. Dynactin subunit 5 subfamily. In terms of assembly, member of the pointed-end complex of the dynactin shoulder complex.

It localises to the cytoplasm. The protein localises to the cytoskeleton. This Dictyostelium discoideum (Social amoeba) protein is Dynactin subunit 5 (dynE).